A 189-amino-acid chain; its full sequence is Dirigent protein 21 (189 aa).

The signal sequence occupies residues 1-19; it reads MASLYLLLLLPLFLALILA. 2 N-linked (GlcNAc...) asparagine glycosylation sites follow: N72 and N173.

Belongs to the plant dirigent protein family. Homodimer.

It is found in the secreted. In terms of biological role, dirigent proteins impart stereoselectivity on the phenoxy radical-coupling reaction, yielding optically active lignans from two molecules of coniferyl alcohol in the biosynthesis of lignans, flavonolignans, and alkaloids and thus plays a central role in plant secondary metabolism. This Arabidopsis thaliana (Mouse-ear cress) protein is Dirigent protein 21 (DIR21).